The chain runs to 662 residues: UvrABC system protein B (662 aa).

In terms of domain architecture, Helicase ATP-binding spans 31–188 (DNIEGGEKAQ…NDLVDIQFER (158 aa)). Position 44–51 (44–51 (GATGTGKT)) interacts with ATP. The Beta-hairpin signature appears at 97–120 (YYDYYQPEAYVPSSDTYIEKDSSV). Residues 435-601 (QIDDLLGEIN…TIKKEIRDLI (167 aa)) enclose the Helicase C-terminal domain. One can recognise a UVR domain in the interval 626–661 (KELVKKLEKQMQEAVEVLDFELAAQIRDMMLEVKAL).

Belongs to the UvrB family. In terms of assembly, forms a heterotetramer with UvrA during the search for lesions. Interacts with UvrC in an incision complex.

Its subcellular location is the cytoplasm. Its function is as follows. The UvrABC repair system catalyzes the recognition and processing of DNA lesions. A damage recognition complex composed of 2 UvrA and 2 UvrB subunits scans DNA for abnormalities. Upon binding of the UvrA(2)B(2) complex to a putative damaged site, the DNA wraps around one UvrB monomer. DNA wrap is dependent on ATP binding by UvrB and probably causes local melting of the DNA helix, facilitating insertion of UvrB beta-hairpin between the DNA strands. Then UvrB probes one DNA strand for the presence of a lesion. If a lesion is found the UvrA subunits dissociate and the UvrB-DNA preincision complex is formed. This complex is subsequently bound by UvrC and the second UvrB is released. If no lesion is found, the DNA wraps around the other UvrB subunit that will check the other stand for damage. The polypeptide is UvrABC system protein B (Streptococcus pneumoniae serotype 2 (strain D39 / NCTC 7466)).